Reading from the N-terminus, the 128-residue chain is 3-aminoacrylate deaminase RutC (128 aa).

The protein belongs to the RutC family.

The enzyme catalyses (Z)-3-aminoacrylate + H2O + H(+) = 3-oxopropanoate + NH4(+). Functionally, involved in pyrimidine catabolism. Catalyzes the deamination of 3-aminoacrylate to malonic semialdehyde, a reaction that can also occur spontaneously. RutC may facilitate the reaction and modulate the metabolic fitness, rather than catalyzing essential functions. This chain is 3-aminoacrylate deaminase RutC, found in Enterobacter sp. (strain 638).